The following is a 157-amino-acid chain: 2-C-methyl-D-erythritol 2,4-cyclodiphosphate synthase (157 aa).

Residues Asp-8 and His-10 each coordinate a divalent metal cation. Residues 8-10 (DVH) and 34-35 (HS) each bind 4-CDP-2-C-methyl-D-erythritol 2-phosphate. His-42 provides a ligand contact to a divalent metal cation. 4-CDP-2-C-methyl-D-erythritol 2-phosphate is bound by residues 56–58 (DIG), 61–65 (FPDTD), 100–106 (AQAPKMA), 132–135 (TTTE), Phe-139, and Arg-142.

It belongs to the IspF family. Homotrimer. A divalent metal cation is required as a cofactor.

The enzyme catalyses 4-CDP-2-C-methyl-D-erythritol 2-phosphate = 2-C-methyl-D-erythritol 2,4-cyclic diphosphate + CMP. It participates in isoprenoid biosynthesis; isopentenyl diphosphate biosynthesis via DXP pathway; isopentenyl diphosphate from 1-deoxy-D-xylulose 5-phosphate: step 4/6. Involved in the biosynthesis of isopentenyl diphosphate (IPP) and dimethylallyl diphosphate (DMAPP), two major building blocks of isoprenoid compounds. Catalyzes the conversion of 4-diphosphocytidyl-2-C-methyl-D-erythritol 2-phosphate (CDP-ME2P) to 2-C-methyl-D-erythritol 2,4-cyclodiphosphate (ME-CPP) with a corresponding release of cytidine 5-monophosphate (CMP). This Pseudomonas syringae pv. tomato (strain ATCC BAA-871 / DC3000) protein is 2-C-methyl-D-erythritol 2,4-cyclodiphosphate synthase.